The primary structure comprises 749 residues: uncharacterized protein (749 aa).

One can recognise a Helicase ATP-binding domain in the interval 63 to 243 (FQYVQKGESI…QLTGKPMRLV (181 aa)). Residue 76–83 (TPTASGKT) coordinates ATP. Positions 185 to 188 (DELH) match the DEVH box motif. Residues 276–430 (EVNELAKEFL…SARINPENLI (155 aa)) form the Helicase C-terminal domain.

Belongs to the helicase family.

This is an uncharacterized protein from Bacillus subtilis (strain 168).